Consider the following 327-residue polypeptide: Pyruvate dehydrogenase E1 component subunit beta (327 aa).

Glu-60 lines the thiamine diphosphate pocket. Ile-113, Ala-161, Ile-162, and Asn-166 together coordinate K(+).

In terms of assembly, heterodimer of an alpha and a beta chain. Thiamine diphosphate serves as cofactor.

It is found in the plastid. It localises to the chloroplast. The enzyme catalyses N(6)-[(R)-lipoyl]-L-lysyl-[protein] + pyruvate + H(+) = N(6)-[(R)-S(8)-acetyldihydrolipoyl]-L-lysyl-[protein] + CO2. Its function is as follows. The pyruvate dehydrogenase complex catalyzes the overall conversion of pyruvate to acetyl-CoA and CO(2). It contains multiple copies of three enzymatic components: pyruvate dehydrogenase (E1), dihydrolipoamide acetyltransferase (E2) and lipoamide dehydrogenase (E3). The polypeptide is Pyruvate dehydrogenase E1 component subunit beta (pdhB) (Mesostigma viride (Green alga)).